Consider the following 105-residue polypeptide: Large ribosomal subunit protein eL42 (105 aa).

The interval 28–57 is disordered; it reads YKKGKDSLAAQGKRRYDRKQSGYGGQTKPV.

It belongs to the eukaryotic ribosomal protein eL42 family.

The protein is Large ribosomal subunit protein eL42 (RPL44) of Gossypium hirsutum (Upland cotton).